Here is a 316-residue protein sequence, read N- to C-terminus: Endochitinase 2 (316 aa).

Residues 1–18 (EFTTLFLLFSVLLLSASA) form the signal peptide. In terms of domain architecture, Chitin-binding type-1 spans 19-60 (EQCGSQAGGALCASGLCCSKFGWCGNTNDYCGPGNCQSQCPG). Cystine bridges form between C21–C36, C30–C42, C35–C49, C54–C58, C87–C150, C162–C170, and C269–C301. Catalysis depends on E132, which acts as the Proton donor. Residues 310-316 (GLLVDTV) constitute a propeptide, removed in mature form, vacuolar targeting.

The protein belongs to the glycosyl hydrolase 19 family. Chitinase class I subfamily.

The protein localises to the vacuole. The catalysed reaction is Random endo-hydrolysis of N-acetyl-beta-D-glucosaminide (1-&gt;4)-beta-linkages in chitin and chitodextrins.. In terms of biological role, defense against chitin-containing fungal pathogens. The chain is Endochitinase 2 (CHTB2) from Solanum tuberosum (Potato).